The primary structure comprises 426 residues: Colanic acid biosynthesis protein WcaK (426 aa).

Belongs to the polysaccharide pyruvyl transferase family.

It functions in the pathway slime biogenesis; slime polysaccharide biosynthesis. This chain is Colanic acid biosynthesis protein WcaK (wcaK), found in Escherichia coli (strain K12).